Consider the following 396-residue polypeptide: Ribosomal RNA large subunit methyltransferase I (396 aa).

The PUA domain occupies 2-81 (SVRLVLAKGR…ESIDIAFFTR (80 aa)).

This sequence belongs to the methyltransferase superfamily. RlmI family.

The protein localises to the cytoplasm. The catalysed reaction is cytidine(1962) in 23S rRNA + S-adenosyl-L-methionine = 5-methylcytidine(1962) in 23S rRNA + S-adenosyl-L-homocysteine + H(+). In terms of biological role, specifically methylates the cytosine at position 1962 (m5C1962) of 23S rRNA. The chain is Ribosomal RNA large subunit methyltransferase I from Escherichia coli (strain SMS-3-5 / SECEC).